A 324-amino-acid polypeptide reads, in one-letter code: Succinylglutamate desuccinylase (324 aa).

Zn(2+)-binding residues include H53, E56, and H148. Residue E211 is part of the active site.

Belongs to the AspA/AstE family. Succinylglutamate desuccinylase subfamily. Zn(2+) is required as a cofactor.

The catalysed reaction is N-succinyl-L-glutamate + H2O = L-glutamate + succinate. Its pathway is amino-acid degradation; L-arginine degradation via AST pathway; L-glutamate and succinate from L-arginine: step 5/5. Transforms N(2)-succinylglutamate into succinate and glutamate. This is Succinylglutamate desuccinylase from Acinetobacter baumannii (strain AB0057).